The sequence spans 74 residues: Ubiquitin-like protein FUBI (74 aa).

This sequence belongs to the ubiquitin family.

The protein is Ubiquitin-like protein FUBI (Fau) of Mus spicilegus (Steppe mouse).